The primary structure comprises 149 residues: MNLTTLYPFLEERKLRKRVGRGSASGLGCTSGKGNKGQNARSGGGVRPGFEGGQMPLQRRLPKHGFKNAFFKVEYAIFNLDWLTTFFKGKNEILLEDIYSHKLCSVGTPVKILGSGSISNIVTIEAHKFSRSALKKLHEVGGQAKIIEK.

A disordered region spans residues 21 to 54; the sequence is RGSASGLGCTSGKGNKGQNARSGGGVRPGFEGGQ. Gly residues-rich tracts occupy residues 23–35 and 42–52; these read SASG…GKGN and SGGGVRPGFEG.

It belongs to the universal ribosomal protein uL15 family. As to quaternary structure, part of the 50S ribosomal subunit.

Binds to the 23S rRNA. This is Large ribosomal subunit protein uL15 from Lawsonia intracellularis (strain PHE/MN1-00).